Consider the following 772-residue polypeptide: Cadherin-19 (772 aa).

An N-terminal signal peptide occupies residues 1 to 21 (MNCYLLLRFMLGIPLLWPCLG). Residues 22 to 43 (ATENSQTKKVKQPVRSHLRVKR) constitute a propeptide that is removed on maturation. Cadherin domains follow at residues 44–148 (GWVW…EPKF), 149–256 (LDEP…KPIF), 257–370 (KESL…PPLF), 371–470 (LLPY…APEF), and 470–581 (FSQY…STQT). The Extracellular portion of the chain corresponds to 44 to 596 (GWVWNQFFVP…LVLSMGFKTE (553 aa)). Residues Asn-57 and Asn-74 are each glycosylated (N-linked (GlcNAc...) asparagine). Asn-419, Asn-437, Asn-508, Asn-515, Asn-516, and Asn-534 each carry an N-linked (GlcNAc...) asparagine glycan. The chain crosses the membrane as a helical span at residues 597–617 (VIIAILICIMIIFGFIFLTLG). Over 618-772 (LKQRRKQILF…MFGSAVQSNN (155 aa)) the chain is Cytoplasmic.

As to expression, expressed in many tissues, with the exception of uterus.

It localises to the cell membrane. Functionally, cadherins are calcium-dependent cell adhesion proteins. They preferentially interact with themselves in a homophilic manner in connecting cells; cadherins may thus contribute to the sorting of heterogeneous cell types. The sequence is that of Cadherin-19 (CDH19) from Homo sapiens (Human).